Here is a 123-residue protein sequence, read N- to C-terminus: Small ribosomal subunit protein uS12 (123 aa).

Aspartate 89 carries the post-translational modification 3-methylthioaspartic acid.

This sequence belongs to the universal ribosomal protein uS12 family. Part of the 30S ribosomal subunit. Contacts proteins S8 and S17. May interact with IF1 in the 30S initiation complex.

Its function is as follows. With S4 and S5 plays an important role in translational accuracy. In terms of biological role, interacts with and stabilizes bases of the 16S rRNA that are involved in tRNA selection in the A site and with the mRNA backbone. Located at the interface of the 30S and 50S subunits, it traverses the body of the 30S subunit contacting proteins on the other side and probably holding the rRNA structure together. The combined cluster of proteins S8, S12 and S17 appears to hold together the shoulder and platform of the 30S subunit. This chain is Small ribosomal subunit protein uS12, found in Desulfovibrio desulfuricans (strain ATCC 27774 / DSM 6949 / MB).